A 547-amino-acid chain; its full sequence is Germacrene A synthase (547 aa).

Mg(2+) contacts are provided by Asp300, Asp304, Asp443, and Glu451. The DDXXD motif motif lies at 300–304 (DDTYD).

Belongs to the terpene synthase family. Tpsa subfamily. The cofactor is Mg(2+). Mn(2+) serves as cofactor. Expressed in leaves.

The protein resides in the plastid. The protein localises to the chloroplast. The enzyme catalyses (2E,6E)-farnesyl diphosphate = germacrene A + diphosphate. It carries out the reaction (2E,6E)-farnesyl diphosphate = (1S,2S,4R)-beta-elemene + diphosphate. Its pathway is secondary metabolite biosynthesis; terpenoid biosynthesis. Its function is as follows. Sesquiterpene synthase involved in the biosynthesis of volatile compounds widely used in aromatherapy and folk medicine, and present in culinary herbs. Mediates the conversion of (2E,6E)-farnesyl diphosphate (FPP) into germacrene A and beta-elemene. Not able to use (2E)-geranyl diphosphate (GPP) as substrate. The protein is Germacrene A synthase of Lavandula pedunculata subsp. lusitanica (French lavender).